The chain runs to 600 residues: Arginine--tRNA ligase (600 aa).

Residues 132–142 (ANPTGPLHVGH) carry the 'HIGH' region motif.

It belongs to the class-I aminoacyl-tRNA synthetase family. In terms of assembly, monomer.

The protein resides in the cytoplasm. It carries out the reaction tRNA(Arg) + L-arginine + ATP = L-arginyl-tRNA(Arg) + AMP + diphosphate. This Ralstonia nicotianae (strain ATCC BAA-1114 / GMI1000) (Ralstonia solanacearum) protein is Arginine--tRNA ligase.